The following is a 138-amino-acid chain: Nucleoside diphosphate kinase (138 aa).

ATP is bound by residues lysine 10, phenylalanine 58, arginine 86, threonine 92, arginine 103, and asparagine 113. Histidine 116 acts as the Pros-phosphohistidine intermediate in catalysis.

This sequence belongs to the NDK family. In terms of assembly, homotetramer. Mg(2+) serves as cofactor.

Its subcellular location is the cytoplasm. The catalysed reaction is a 2'-deoxyribonucleoside 5'-diphosphate + ATP = a 2'-deoxyribonucleoside 5'-triphosphate + ADP. It catalyses the reaction a ribonucleoside 5'-diphosphate + ATP = a ribonucleoside 5'-triphosphate + ADP. Its function is as follows. Major role in the synthesis of nucleoside triphosphates other than ATP. The ATP gamma phosphate is transferred to the NDP beta phosphate via a ping-pong mechanism, using a phosphorylated active-site intermediate. The protein is Nucleoside diphosphate kinase of Haemophilus ducreyi (strain 35000HP / ATCC 700724).